A 227-amino-acid chain; its full sequence is PKHD-type hydroxylase M446_1130 (227 aa).

In terms of domain architecture, Fe2OG dioxygenase spans glutamine 78–serine 178. Fe cation contacts are provided by histidine 96, aspartate 98, and histidine 159. Arginine 169 provides a ligand contact to 2-oxoglutarate.

Fe(2+) is required as a cofactor. It depends on L-ascorbate as a cofactor.

The protein is PKHD-type hydroxylase M446_1130 of Methylobacterium sp. (strain 4-46).